We begin with the raw amino-acid sequence, 278 residues long: NAD-capped RNA hydrolase NudC (278 aa).

Position 84 (Arg-84) interacts with substrate. Residues Cys-114 and Cys-117 each coordinate Zn(2+). Position 127 (Glu-127) interacts with substrate. Cys-132 contacts Zn(2+). Tyr-140 is a substrate binding site. In terms of domain architecture, Nudix hydrolase spans 141-264 (PRISPSMIVL…SIARYLIEAY (124 aa)). A divalent metal cation is bound by residues Ala-174, Glu-190, and Glu-194. Residues 175–196 (GFVEPGESAEDCVHREVMEEVQ) carry the Nudix box motif. 208-215 (QCWPFPHS) is a binding site for substrate. Glu-235 contacts a divalent metal cation. Ala-257 is a substrate binding site.

This sequence belongs to the Nudix hydrolase family. NudC subfamily. As to quaternary structure, homodimer. Mg(2+) serves as cofactor. The cofactor is Mn(2+). Zn(2+) is required as a cofactor.

It catalyses the reaction a 5'-end NAD(+)-phospho-ribonucleoside in mRNA + H2O = a 5'-end phospho-adenosine-phospho-ribonucleoside in mRNA + beta-nicotinamide D-ribonucleotide + 2 H(+). The catalysed reaction is NAD(+) + H2O = beta-nicotinamide D-ribonucleotide + AMP + 2 H(+). The enzyme catalyses NADH + H2O = reduced beta-nicotinamide D-ribonucleotide + AMP + 2 H(+). In terms of biological role, mRNA decapping enzyme that specifically removes the nicotinamide adenine dinucleotide (NAD) cap from a subset of mRNAs by hydrolyzing the diphosphate linkage to produce nicotinamide mononucleotide (NMN) and 5' monophosphate mRNA. The NAD-cap is present at the 5'-end of some mRNAs and stabilizes RNA against 5'-processing. Has preference for mRNAs with a 5'-end purine. Catalyzes the hydrolysis of a broad range of dinucleotide pyrophosphates. In Pseudomonas syringae pv. syringae (strain B728a), this protein is NAD-capped RNA hydrolase NudC.